Here is a 469-residue protein sequence, read N- to C-terminus: 3-isopropylmalate dehydratase large subunit (469 aa).

[4Fe-4S] cluster-binding residues include Cys347, Cys407, and Cys410.

The protein belongs to the aconitase/IPM isomerase family. LeuC type 1 subfamily. As to quaternary structure, heterodimer of LeuC and LeuD. The cofactor is [4Fe-4S] cluster.

The catalysed reaction is (2R,3S)-3-isopropylmalate = (2S)-2-isopropylmalate. It participates in amino-acid biosynthesis; L-leucine biosynthesis; L-leucine from 3-methyl-2-oxobutanoate: step 2/4. Functionally, catalyzes the isomerization between 2-isopropylmalate and 3-isopropylmalate, via the formation of 2-isopropylmaleate. This chain is 3-isopropylmalate dehydratase large subunit, found in Prochlorococcus marinus (strain NATL2A).